Here is a 209-residue protein sequence, read N- to C-terminus: Thymidine kinase (209 aa).

ATP is bound by residues 9–16 (SAMNAGKT) and 88–91 (DEAQ). Catalysis depends on E89, which acts as the Proton acceptor.

This sequence belongs to the thymidine kinase family. As to quaternary structure, homotetramer.

It is found in the cytoplasm. It catalyses the reaction thymidine + ATP = dTMP + ADP + H(+). In Xanthomonas campestris pv. campestris (strain 8004), this protein is Thymidine kinase.